The following is a 366-amino-acid chain: tRNA/tmRNA (uracil-C(5))-methyltransferase (366 aa).

Residues glutamine 190, tyrosine 218, asparagine 223, glutamate 239, and aspartate 299 each contribute to the S-adenosyl-L-methionine site. Residue cysteine 324 is the Nucleophile of the active site. The Proton acceptor role is filled by glutamate 358.

This sequence belongs to the class I-like SAM-binding methyltransferase superfamily. RNA M5U methyltransferase family. TrmA subfamily.

The catalysed reaction is uridine(54) in tRNA + S-adenosyl-L-methionine = 5-methyluridine(54) in tRNA + S-adenosyl-L-homocysteine + H(+). It carries out the reaction uridine(341) in tmRNA + S-adenosyl-L-methionine = 5-methyluridine(341) in tmRNA + S-adenosyl-L-homocysteine + H(+). Functionally, dual-specificity methyltransferase that catalyzes the formation of 5-methyluridine at position 54 (m5U54) in all tRNAs, and that of position 341 (m5U341) in tmRNA (transfer-mRNA). The protein is tRNA/tmRNA (uracil-C(5))-methyltransferase of Salmonella typhi.